The sequence spans 72 residues: 3-deoxy-manno-octulosonate cytidylyltransferase (72 aa).

This sequence belongs to the KdsB family. In terms of assembly, homodimer.

It localises to the cytoplasm. The enzyme catalyses 3-deoxy-alpha-D-manno-oct-2-ulosonate + CTP = CMP-3-deoxy-beta-D-manno-octulosonate + diphosphate. Its pathway is nucleotide-sugar biosynthesis; CMP-3-deoxy-D-manno-octulosonate biosynthesis; CMP-3-deoxy-D-manno-octulosonate from 3-deoxy-D-manno-octulosonate and CTP: step 1/1. The protein operates within bacterial outer membrane biogenesis; lipopolysaccharide biosynthesis. Functionally, activates KDO (a required 8-carbon sugar) for incorporation into bacterial lipopolysaccharide in Gram-negative bacteria. This is 3-deoxy-manno-octulosonate cytidylyltransferase (kpsU) from Escherichia coli.